The primary structure comprises 137 residues: Proofreading thioesterase EntH (137 aa).

E63 functions as the Nucleophile or proton acceptor in the catalytic mechanism.

It belongs to the thioesterase PaaI family. Homotetramer. Dimer of dimers. Interacts specifically with the aryl carrier protein (ArCP) domain of EntB.

It is found in the cytoplasm. It participates in siderophore biosynthesis; enterobactin biosynthesis. Required for optimal enterobactin synthesis. Acts as a proofreading enzyme that prevents EntB misacylation by hydrolyzing the thioester bound existing between EntB and wrongly charged molecules. The sequence is that of Proofreading thioesterase EntH from Cronobacter sakazakii (strain ATCC BAA-894) (Enterobacter sakazakii).